We begin with the raw amino-acid sequence, 141 residues long: Nucleoside diphosphate kinase (141 aa).

6 residues coordinate ATP: Lys11, Phe59, Arg87, Thr93, Arg104, and Asn114. His117 functions as the Pros-phosphohistidine intermediate in the catalytic mechanism.

The protein belongs to the NDK family. As to quaternary structure, homotetramer. Mg(2+) is required as a cofactor.

It localises to the cytoplasm. It catalyses the reaction a 2'-deoxyribonucleoside 5'-diphosphate + ATP = a 2'-deoxyribonucleoside 5'-triphosphate + ADP. It carries out the reaction a ribonucleoside 5'-diphosphate + ATP = a ribonucleoside 5'-triphosphate + ADP. In terms of biological role, major role in the synthesis of nucleoside triphosphates other than ATP. The ATP gamma phosphate is transferred to the NDP beta phosphate via a ping-pong mechanism, using a phosphorylated active-site intermediate. The protein is Nucleoside diphosphate kinase of Paraburkholderia phytofirmans (strain DSM 17436 / LMG 22146 / PsJN) (Burkholderia phytofirmans).